The following is a 613-amino-acid chain: Kelch-like protein 36 (613 aa).

The 68-residue stretch at cysteine 45–glycine 112 folds into the BTB domain. The region spanning tyrosine 147–lysine 249 is the BACK domain. Kelch repeat units lie at residues cysteine 294–glycine 343, phenylalanine 344–aspartate 395, methionine 396–aspartate 442, valine 444–aspartate 491, serine 492–glycine 544, and arginine 545–leucine 593.

As to quaternary structure, interacts with CUL3.

Its pathway is protein modification; protein ubiquitination. Probable substrate-specific adapter of an E3 ubiquitin-protein ligase complex which mediates the ubiquitination and subsequent proteasomal degradation of target proteins. The chain is Kelch-like protein 36 (Klhl36) from Rattus norvegicus (Rat).